The sequence spans 239 residues: Transcriptional regulatory protein DcuR (239 aa).

The 119-residue stretch at 3–121 folds into the Response regulatory domain; the sequence is NVLIIDDDAM…RFEEALTGWR (119 aa). Aspartate 56 carries the 4-aspartylphosphate modification. Residues 181–200 constitute a DNA-binding region (H-T-H motif); that stretch reads TDELANEVNISRVSCRKYLI.

Phosphorylated and activated by DcuS.

It is found in the cytoplasm. Member of the two-component regulatory system DcuR/DcuS. Involved in the C4-dicarboxylate-stimulated regulation of the genes encoding the anaerobic fumarate respiratory system (frdABCD; nuoAN; dcuB; dcuC; sdhCDAB; etc.). Weakly regulates the aerobic C4-dicarboxylate transporter dctA. In Shigella flexneri, this protein is Transcriptional regulatory protein DcuR (dcuR).